The primary structure comprises 220 residues: Nitrile hydratase subunit beta (220 aa).

The protein belongs to the nitrile hydratase subunit beta family. As to quaternary structure, heterodimer of an alpha and a beta chain.

It catalyses the reaction an aliphatic primary amide = an aliphatic nitrile + H2O. Functionally, NHase catalyzes the hydration of various nitrile compounds to the corresponding amides. The chain is Nitrile hydratase subunit beta (nthB) from Pseudomonas chlororaphis (Pseudomonas aureofaciens).